Here is a 307-residue protein sequence, read N- to C-terminus: Homoserine O-acetyltransferase (307 aa).

Cysteine 142 acts as the Acyl-thioester intermediate in catalysis. Positions 163 and 192 each coordinate substrate. Histidine 235 acts as the Proton acceptor in catalysis. Glutamate 237 is a catalytic residue. Residue arginine 249 participates in substrate binding.

The protein belongs to the MetA family.

The protein resides in the cytoplasm. It carries out the reaction L-homoserine + acetyl-CoA = O-acetyl-L-homoserine + CoA. It functions in the pathway amino-acid biosynthesis; L-methionine biosynthesis via de novo pathway; O-acetyl-L-homoserine from L-homoserine: step 1/1. Its function is as follows. Transfers an acetyl group from acetyl-CoA to L-homoserine, forming acetyl-L-homoserine. In Desulfitobacterium hafniense (strain DSM 10664 / DCB-2), this protein is Homoserine O-acetyltransferase.